The sequence spans 440 residues: 2-phosphinomethylmalate synthase (440 aa).

Residues 39–313 (VWLSETTHRD…GARVNLPAVN (275 aa)) enclose the Pyruvate carboxyltransferase domain.

The protein belongs to the alpha-IPM synthase/homocitrate synthase family. Homodimer. The cofactor is Mn(2+). Co(2+) serves as cofactor.

It carries out the reaction 3-(hydrohydroxyphosphoryl)pyruvate + acetyl-CoA + H2O = phosphinomethylmalate + CoA + H(+). The protein operates within secondary metabolite biosynthesis; bialaphos biosynthesis. Its activity is regulated as follows. Strongly inhibited by p-chloromercuribenzoate (pCMB), iodoacetamide (IA) and EDTA. Involved in the biosynthesis of phosphinothricin tripeptide (PTT), also known as bialaphos (BA), a natural-product antibiotic and potent herbicide. Catalyzes the condensation berween phosphinopyruvic acid (PPA), an analog of oxalacetic acid, and acetyl-CoA to form R-2-phosphinomethylmalic acid (PMM). Can also act on oxaloacetate, but shows no activity when acetyl-CoA is substituted by propionyl-CoA or butyryl-CoA. The protein is 2-phosphinomethylmalate synthase of Streptomyces hygroscopicus.